The chain runs to 763 residues: Putative pentatricopeptide repeat-containing protein At1g74580 (763 aa).

PPR repeat units lie at residues 39–69 (TLSTYRSVIEKLGYYGKFEAMEEVLVDMREN), 75–109 (LEGVYVGAMKNYGRKGKVQEAVNVFERMDFYDCEP), 110–144 (TVFSYNAIMSVLVDSGYFDQAHKVYMRMRDRGITP), 145–179 (DVYSFTIRMKSFCKTSRPHAALRLLNNMSSQGCEM), 180–214 (NVVAYCTVVGGFYEENFKAEGYELFGKMLASGVSL), 215–249 (CLSTFNKLLRVLCKKGDVKECEKLLDKVIKRGVLP), 250–284 (NLFTYNLFIQGLCQRGELDGAVRMVGCLIEQGPKP), 285–319 (DVITYNNLIYGLCKNSKFQEAEVYLGKMVNEGLEP), 320–354 (DSYTYNTLIAGYCKGGMVQLAERIVGDAVFNGFVP), 355–389 (DQFTYRSLIDGLCHEGETNRALALFNEALGKGIKP), 390–424 (NVILYNTLIKGLSNQGMILEAAQLANEMSEKGLIP), 425–459 (EVQTFNILVNGLCKMGCVSDADGLVKVMISKGYFP), 460–494 (DIFTFNILIHGYSTQLKMENALEILDVMLDNGVDP), 495–529 (DVYTYNSLLNGLCKTSKFEDVMETYKTMVEKGCAP), 530–564 (NLFTFNILLESLCRYRKLDEALGLLEEMKNKSVNP), 565–595 (DAVTFGTLIDGFCKNGDLDGAYTLFRKMEEA), 601–635 (STPTYNIIIHAFTEKLNVTMAEKLFQEMVDRCLGP), 636–670 (DGYTYRLMVDGFCKTGNVNLGYKFLLEMMENGFIP), and 671–705 (SLTTLGRVINCLCVEDRVYEAAGIIHRMVQKGLVP).

It belongs to the PPR family. P subfamily.

In Arabidopsis thaliana (Mouse-ear cress), this protein is Putative pentatricopeptide repeat-containing protein At1g74580.